Here is a 1179-residue protein sequence, read N- to C-terminus: Serine/threonine-protein kinase pakG (1179 aa).

Residues 12-53 (SKTNEDIELIKQKLKEDRELLEKERAQFEEERKIIFESLNKV) adopt a coiled-coil conformation. The 14-residue stretch at 111 to 124 (IGTPFNVQHKVHVD) folds into the CRIB domain. The region spanning 139–390 (FLIDCILGTG…AIELLTHPFL (252 aa)) is the Protein kinase domain. ATP contacts are provided by residues 145–153 (LGTGSYGTV) and K168. The active-site Proton acceptor is D257. Disordered regions lie at residues 414-469 (KKKK…SSLD), 589-631 (IGNS…NNNN), 705-1086 (SSSS…PITL), and 1121-1179 (TEIN…SPKK). A coiled-coil region spans residues 621-668 (NNNNNNNNNNNEFLINQIKKELILDFNENMKQYINQQLTNLKEEMLKE). Composition is skewed to low complexity over residues 705-723 (SSSS…SNSS) and 743-761 (LPPS…TSSP). The span at 762–776 (SPSPSPSPSPSPSSP) shows a compositional bias: pro residues. Low complexity-rich tracts occupy residues 777–788 (LPSSSTSTVNTP) and 812–833 (NNNN…NNNN). Polar residues predominate over residues 834 to 857 (VIQSPKLNNRPLSPTTPTKQFNNR). Residues 864-891 (FNNRPPSPSKFNNRPPSPSNRPLSPKNS) show a composition bias toward low complexity. Over residues 892 to 946 (YNSLEKSNNGSISNNRPLSPKNSLEKSTTQNNTSSEDISTTTVTVTSEQGGTPIT) the composition is skewed to polar residues. A compositionally biased stretch (pro residues) spans 954-963 (RPKPSPPPIP). 3 stretches are compositionally biased toward low complexity: residues 964–997 (MNKS…TIAA), 1024–1046 (TTIT…SPNS), and 1053–1077 (ITTS…SSSN). Positions 1121–1135 (TEINLPSSSPSTPQK) are enriched in polar residues. A compositionally biased stretch (low complexity) spans 1137–1158 (NTPSSIPTTPTTPTTNGGSVSS).

This sequence belongs to the protein kinase superfamily. STE Ser/Thr protein kinase family. STE20 subfamily. The cofactor is Mg(2+).

The catalysed reaction is L-seryl-[protein] + ATP = O-phospho-L-seryl-[protein] + ADP + H(+). It catalyses the reaction L-threonyl-[protein] + ATP = O-phospho-L-threonyl-[protein] + ADP + H(+). The polypeptide is Serine/threonine-protein kinase pakG (Dictyostelium discoideum (Social amoeba)).